A 679-amino-acid polypeptide reads, in one-letter code: Transmembrane protein 214-B (679 aa).

The interval 1–94 (MASGAPDGKW…KKKPQSGDSV (94 aa)) is disordered. Positions 18–30 (KSGERREGERKAL) are enriched in basic and acidic residues. N-linked (GlcNAc...) asparagine glycans are attached at residues asparagine 70, asparagine 298, and asparagine 322. A run of 2 helical transmembrane segments spans residues 468–488 (GGFPWWRLIVIAFVFLFGSVL) and 606–626 (LLLHLHQTYLLPAVTYLEAAV).

This sequence belongs to the TMEM214 family. In terms of assembly, constitutively interacts with CASP4; required for the localization of procaspase 4 to the ER.

The protein localises to the endoplasmic reticulum membrane. Its function is as follows. Critical mediator, in cooperation with CASP4, of endoplasmic reticulum-stress induced apoptosis. Required or the activation of CASP4 following endoplasmic reticulum stress. The chain is Transmembrane protein 214-B (tmem214-b) from Xenopus laevis (African clawed frog).